The sequence spans 863 residues: Paramyosin (863 aa).

Residues M1–P26 form a nonhelical region region. Residues V27–I836 are a coiled coil. The interval G837 to M863 is nonhelical region.

Belongs to the paramyosin family. Homodimer.

It localises to the cytoplasm. Its subcellular location is the myofibril. Its function is as follows. Paramyosin is a major structural component of many thick filaments isolated from invertebrate muscles. In Echinococcus granulosus (Hydatid tapeworm), this protein is Paramyosin.